We begin with the raw amino-acid sequence, 304 residues long: Prephenate dehydratase (304 aa).

Positions 3–178 (RIAYFGPVGT…ARTRFLLMRR (176 aa)) constitute a Prephenate dehydratase domain. Positions 193-271 (SIVAAAANRT…DVRFLGSFAR (79 aa)) constitute an ACT domain.

It carries out the reaction prephenate + H(+) = 3-phenylpyruvate + CO2 + H2O. It participates in amino-acid biosynthesis; L-phenylalanine biosynthesis; phenylpyruvate from prephenate: step 1/1. The protein is Prephenate dehydratase (pheA) of Amycolatopsis methanolica.